A 425-amino-acid chain; its full sequence is Enolase (425 aa).

Residue Gln162 coordinates (2R)-2-phosphoglycerate. Glu204 acts as the Proton donor in catalysis. 3 residues coordinate Mg(2+): Asp241, Glu282, and Asp309. Residues Lys334, Arg363, Ser364, and Lys385 each contribute to the (2R)-2-phosphoglycerate site. Lys334 (proton acceptor) is an active-site residue.

Belongs to the enolase family. Mg(2+) is required as a cofactor.

It is found in the cytoplasm. Its subcellular location is the secreted. The protein resides in the cell surface. The catalysed reaction is (2R)-2-phosphoglycerate = phosphoenolpyruvate + H2O. It functions in the pathway carbohydrate degradation; glycolysis; pyruvate from D-glyceraldehyde 3-phosphate: step 4/5. In terms of biological role, catalyzes the reversible conversion of 2-phosphoglycerate (2-PG) into phosphoenolpyruvate (PEP). It is essential for the degradation of carbohydrates via glycolysis. This is Enolase from Corynebacterium aurimucosum (strain ATCC 700975 / DSM 44827 / CIP 107346 / CN-1) (Corynebacterium nigricans).